A 147-amino-acid polypeptide reads, in one-letter code: D-aminoacyl-tRNA deacylase (147 aa).

A Gly-cisPro motif, important for rejection of L-amino acids motif is present at residues 136–137 (GP).

It belongs to the DTD family. In terms of assembly, homodimer.

The protein resides in the cytoplasm. It catalyses the reaction glycyl-tRNA(Ala) + H2O = tRNA(Ala) + glycine + H(+). It carries out the reaction a D-aminoacyl-tRNA + H2O = a tRNA + a D-alpha-amino acid + H(+). Its function is as follows. An aminoacyl-tRNA editing enzyme that deacylates mischarged D-aminoacyl-tRNAs. Also deacylates mischarged glycyl-tRNA(Ala), protecting cells against glycine mischarging by AlaRS. Acts via tRNA-based rather than protein-based catalysis; rejects L-amino acids rather than detecting D-amino acids in the active site. By recycling D-aminoacyl-tRNA to D-amino acids and free tRNA molecules, this enzyme counteracts the toxicity associated with the formation of D-aminoacyl-tRNA entities in vivo and helps enforce protein L-homochirality. This is D-aminoacyl-tRNA deacylase from Streptococcus agalactiae serotype Ia (strain ATCC 27591 / A909 / CDC SS700).